The primary structure comprises 230 residues: Uracil-DNA glycosylase (230 aa).

Asp-65 functions as the Proton acceptor in the catalytic mechanism.

Belongs to the uracil-DNA glycosylase (UDG) superfamily. UNG family.

It is found in the cytoplasm. The enzyme catalyses Hydrolyzes single-stranded DNA or mismatched double-stranded DNA and polynucleotides, releasing free uracil.. Its function is as follows. Excises uracil residues from the DNA which can arise as a result of misincorporation of dUMP residues by DNA polymerase or due to deamination of cytosine. This chain is Uracil-DNA glycosylase, found in Pediococcus pentosaceus (strain ATCC 25745 / CCUG 21536 / LMG 10740 / 183-1w).